The following is a 434-amino-acid chain: Transcriptional enhancer factor TEF-3 (434 aa).

The span at 1–28 (MEGTAGTITSNEWSSPTSPEGSTASGGS) shows a compositional bias: polar residues. 2 disordered regions span residues 1-42 (MEGT…AEGV) and 188-215 (QPPLPLPGFESPAGPAPSPSAPPAPPWQ). The segment at residues 36–112 (DNDAEGVWSP…QVLARRKARE (77 aa)) is a DNA-binding region (TEA). Positions 201 to 213 (GPAPSPSAPPAPP) are enriched in pro residues.

In terms of assembly, interacts with YAP1 and WWTR1/TAZ. As to expression, preferentially expressed in skeletal muscle. Lower levels in pancreas, placenta, and heart.

The protein resides in the nucleus. Functionally, transcription factor which plays a key role in the Hippo signaling pathway, a pathway involved in organ size control and tumor suppression by restricting proliferation and promoting apoptosis. The core of this pathway is composed of a kinase cascade wherein MST1/MST2, in complex with its regulatory protein SAV1, phosphorylates and activates LATS1/2 in complex with its regulatory protein MOB1, which in turn phosphorylates and inactivates YAP1 oncoprotein and WWTR1/TAZ. Acts by mediating gene expression of YAP1 and WWTR1/TAZ, thereby regulating cell proliferation, migration and epithelial mesenchymal transition (EMT) induction. Binds specifically and non-cooperatively to the Sph and GT-IIC 'enhansons' (5'-GTGGAATGT-3') and activates transcription. Binds to the M-CAT motif. In Homo sapiens (Human), this protein is Transcriptional enhancer factor TEF-3 (TEAD4).